The chain runs to 64 residues: Large ribosomal subunit protein bL32 (64 aa).

The protein belongs to the bacterial ribosomal protein bL32 family.

The polypeptide is Large ribosomal subunit protein bL32 (Bifidobacterium longum (strain DJO10A)).